A 454-amino-acid polypeptide reads, in one-letter code: tRNA modification GTPase MnmE (454 aa).

(6S)-5-formyl-5,6,7,8-tetrahydrofolate-binding residues include Arg23, Glu80, and Lys120. Residues 216–377 form the TrmE-type G domain; the sequence is GMKVVIAGRP…LRDHLKQSMG (162 aa). Asn226 is a K(+) binding site. GTP contacts are provided by residues 226–231, 245–251, 270–273, 335–338, and 358–360; these read NAGKSS, TDIAGTT, DTAG, NKAD, and SAR. Ser230 is a binding site for Mg(2+). Thr245, Ile247, and Thr250 together coordinate K(+). Thr251 is a Mg(2+) binding site. Residue Lys454 coordinates (6S)-5-formyl-5,6,7,8-tetrahydrofolate.

This sequence belongs to the TRAFAC class TrmE-Era-EngA-EngB-Septin-like GTPase superfamily. TrmE GTPase family. In terms of assembly, homodimer. Heterotetramer of two MnmE and two MnmG subunits. Requires K(+) as cofactor.

Its subcellular location is the cytoplasm. Its function is as follows. Exhibits a very high intrinsic GTPase hydrolysis rate. Involved in the addition of a carboxymethylaminomethyl (cmnm) group at the wobble position (U34) of certain tRNAs, forming tRNA-cmnm(5)s(2)U34. The polypeptide is tRNA modification GTPase MnmE (Yersinia pestis).